Consider the following 567-residue polypeptide: Oxygen-dependent choline dehydrogenase (567 aa).

4–33 (DYIIIGAGSAGNVLAARLTEDADVTVLLLE) provides a ligand contact to FAD. Catalysis depends on histidine 473, which acts as the Proton acceptor.

This sequence belongs to the GMC oxidoreductase family. FAD serves as cofactor.

It catalyses the reaction choline + A = betaine aldehyde + AH2. The enzyme catalyses betaine aldehyde + NAD(+) + H2O = glycine betaine + NADH + 2 H(+). The protein operates within amine and polyamine biosynthesis; betaine biosynthesis via choline pathway; betaine aldehyde from choline (cytochrome c reductase route): step 1/1. Involved in the biosynthesis of the osmoprotectant glycine betaine. Catalyzes the oxidation of choline to betaine aldehyde and betaine aldehyde to glycine betaine at the same rate. The protein is Oxygen-dependent choline dehydrogenase of Yersinia pseudotuberculosis serotype IB (strain PB1/+).